Here is a 237-residue protein sequence, read N- to C-terminus: tRNA (guanine-N(7)-)-methyltransferase (237 aa).

Glu56, Glu81, Asp108, and Asp131 together coordinate S-adenosyl-L-methionine. Asp131 is an active-site residue. Residues Lys135, Asp167, and 204–207 contribute to the substrate site; that span reads TKFE.

Belongs to the class I-like SAM-binding methyltransferase superfamily. TrmB family.

It carries out the reaction guanosine(46) in tRNA + S-adenosyl-L-methionine = N(7)-methylguanosine(46) in tRNA + S-adenosyl-L-homocysteine. It participates in tRNA modification; N(7)-methylguanine-tRNA biosynthesis. Catalyzes the formation of N(7)-methylguanine at position 46 (m7G46) in tRNA. This chain is tRNA (guanine-N(7)-)-methyltransferase, found in Legionella pneumophila (strain Paris).